A 185-amino-acid chain; its full sequence is Iodate reductase subunit IdrB (185 aa).

Positions 1-46 (MTTHPIHLHHDDPAHGGERACMSRRSFLLAGGAMVTLASLPGTAVA) form a signal peptide, tat-type signal. The region spanning 69–168 (GEPLEFAYPY…LEVRGDDIYA (100 aa)) is the Rieske domain. Positions 109, 111, 130, and 133 each coordinate [2Fe-2S] cluster.

The protein belongs to the AOX family. In terms of assembly, the iodate reductase (Idr) complex is composed of a molybdopterin-dependent iodate reductase (IdrA and IdrB subunits) and two associated peroxidases (IdrP1 and IdrP2). It depends on [2Fe-2S] cluster as a cofactor. In terms of processing, predicted to be exported by the Tat system. The position of the signal peptide cleavage has not been experimentally proven.

The protein localises to the periplasm. In terms of biological role, involved in iodate respiration. May accept electrons from cytochrome c551, and catalyze the reduction of iodate (IO(3)(-)) to produce the chemically unstable intermediate hypoiodous acid (HIO). This intermediate then undergoes abiotic disproportionation to yield two molecules of iodide (I(-)) and one molecule of iodate. The resultant iodate subsequently cycles back into the reductive pathway. The initial reduction of iodate may inadvertently produce low levels of incidental toxic H(2)O(2), which is detoxified by IdrP1 and IdrP2. The polypeptide is Iodate reductase subunit IdrB (Denitromonas iodatirespirans).